The sequence spans 199 residues: Lysine exporter LysE (199 aa).

Transmembrane regions (helical) follow at residues 6 to 26 (VVGF…NAFV), 42 to 62 (LCTV…GALI), 68 to 88 (ALNV…LLAA), 144 to 164 (WLFG…LGFG), and 178 to 198 (WRIL…SLTV).

The protein belongs to the LysE/ArgO transporter (TC 2.A.75) family.

Its subcellular location is the cell inner membrane. In terms of biological role, catalyzes the efflux of L-lysine. In Mycobacterium bovis (strain ATCC BAA-935 / AF2122/97), this protein is Lysine exporter LysE.